A 403-amino-acid chain; its full sequence is Rhomboid-like protein 15 (403 aa).

The next 5 membrane-spanning stretches (helical) occupy residues 22–42 (IPFL…ICLL), 70–90 (AIIF…LVPM), 103–123 (LLYL…LIAS), 141–161 (AIGF…LSGV), and 176–196 (LYPW…SLLG). The active-site Nucleophile is Ser-145. His-197 acts as the Charge relay system in catalysis. A helical transmembrane segment spans residues 198-218 (LCGILSGFSYSYGLFNFLMPG). Positions 282-316 (EASNQSSEDSRFPGRGRTLSTARDPTAPAGETDPN) are disordered. Residues 361–401 (AASEEQIQKLVAMGFDRTQVEVALAAADDDLTVAVEILMSQ) enclose the UBA domain.

The protein belongs to the peptidase S54 family.

It localises to the membrane. Its function is as follows. Probable rhomboid-type serine protease that catalyzes intramembrane proteolysis. May function in senescence. This is Rhomboid-like protein 15 from Arabidopsis thaliana (Mouse-ear cress).